Here is a 36-residue protein sequence, read N- to C-terminus: Photosystem I reaction center subunit VIII (36 aa).

Residues 9–29 (ILVPLVGLIFPAFSMALFFLY) form a helical membrane-spanning segment.

The protein belongs to the PsaI family.

It localises to the plastid. The protein resides in the chloroplast thylakoid membrane. May help in the organization of the PsaL subunit. This Thalassiosira pseudonana (Marine diatom) protein is Photosystem I reaction center subunit VIII.